Consider the following 381-residue polypeptide: Putative F-box/kelch-repeat protein At1g60570 (381 aa).

An F-box domain is found at 19 to 65 (PTLIPSLPEELILSILARVSRLSYRSLSLVCKRFHSLLTSGEIYRFR). Kelch repeat units follow at residues 126 to 169 (KIYK…LIDG), 171 to 218 (IYVT…ERTN), 220 to 266 (LLVD…VIEN), and 269 to 314 (YDFF…DYGG).

In Arabidopsis thaliana (Mouse-ear cress), this protein is Putative F-box/kelch-repeat protein At1g60570.